Reading from the N-terminus, the 421-residue chain is Enolase (421 aa).

Position 165 (Q165) interacts with (2R)-2-phosphoglycerate. The active-site Proton donor is E207. 3 residues coordinate Mg(2+): D244, E285, and D312. (2R)-2-phosphoglycerate contacts are provided by K337, R366, S367, and K388. K337 functions as the Proton acceptor in the catalytic mechanism.

Belongs to the enolase family. It depends on Mg(2+) as a cofactor.

It is found in the cytoplasm. The protein localises to the secreted. The protein resides in the cell surface. It carries out the reaction (2R)-2-phosphoglycerate = phosphoenolpyruvate + H2O. It functions in the pathway carbohydrate degradation; glycolysis; pyruvate from D-glyceraldehyde 3-phosphate: step 4/5. Catalyzes the reversible conversion of 2-phosphoglycerate (2-PG) into phosphoenolpyruvate (PEP). It is essential for the degradation of carbohydrates via glycolysis. The sequence is that of Enolase from Ehrlichia canis (strain Jake).